The sequence spans 421 residues: Alpha-1-antitrypsin-related protein (421 aa).

The first 21 residues, 1 to 21 (MPFSVSWGILLLAGLCCLVPS), serve as a signal peptide directing secretion. N-linked (GlcNAc...) asparagine glycosylation is found at asparagine 56, asparagine 110, asparagine 148, and asparagine 274.

Belongs to the serpin family. In terms of assembly, interacts with CANX and PDIA3. Post-translationally, glycosylated. Expressed in the liver, leukocytes and testis. Also detected in brain, colon, uterus, esophagus, spleen, trachea, kidney and lung.

The protein localises to the endoplasmic reticulum. In terms of biological role, putative serine protease inhibitor. The chain is Alpha-1-antitrypsin-related protein (SERPINA2) from Homo sapiens (Human).